Reading from the N-terminus, the 68-residue chain is Large ribosomal subunit protein bL35 (68 aa).

Belongs to the bacterial ribosomal protein bL35 family.

The chain is Large ribosomal subunit protein bL35 from Orientia tsutsugamushi (strain Boryong) (Rickettsia tsutsugamushi).